The primary structure comprises 502 residues: Glycerol kinase (502 aa).

Thr14 serves as a coordination point for ADP. Thr14, Thr15, and Ser16 together coordinate ATP. Thr14 contacts sn-glycerol 3-phosphate. Arg18 serves as a coordination point for ADP. Sn-glycerol 3-phosphate is bound by residues Arg84, Glu85, Tyr136, and Asp246. Residues Arg84, Glu85, Tyr136, Asp246, and Gln247 each coordinate glycerol. The ADP site is built by Thr268 and Gly311. 4 residues coordinate ATP: Thr268, Gly311, Gln315, and Gly412. 2 residues coordinate ADP: Gly412 and Asn416.

This sequence belongs to the FGGY kinase family. As to quaternary structure, homotetramer and homodimer (in equilibrium). Heterodimer with EIIA-Glc. Binds 1 zinc ion per glycerol kinase EIIA-Glc dimer. The zinc ion is important for dimerization.

It carries out the reaction glycerol + ATP = sn-glycerol 3-phosphate + ADP + H(+). The protein operates within polyol metabolism; glycerol degradation via glycerol kinase pathway; sn-glycerol 3-phosphate from glycerol: step 1/1. Its activity is regulated as follows. Activity of this regulatory enzyme is affected by several metabolites. Allosterically and non-competitively inhibited by fructose 1,6-bisphosphate (FBP) and unphosphorylated phosphocarrier protein EIIA-Glc (III-Glc), an integral component of the bacterial phosphotransferase (PTS) system. Key enzyme in the regulation of glycerol uptake and metabolism. Catalyzes the phosphorylation of glycerol to yield sn-glycerol 3-phosphate. This chain is Glycerol kinase, found in Salmonella agona (strain SL483).